We begin with the raw amino-acid sequence, 637 residues long: Chaperone protein HtpG (637 aa).

The segment at 1 to 335 (MQGTVNSERL…SSDLPLNISR (335 aa)) is a; substrate-binding. Positions 336 to 559 (ETLQNNKIIE…DGSMDIRMER (224 aa)) are b. The interval 560 to 637 (FLREQKQLNY…RMNNVLSQIN (78 aa)) is c.

Belongs to the heat shock protein 90 family. As to quaternary structure, homodimer.

The protein localises to the cytoplasm. Functionally, molecular chaperone. Has ATPase activity. This Ehrlichia ruminantium (strain Welgevonden) protein is Chaperone protein HtpG.